The sequence spans 375 residues: DNA replication and repair protein RecF (375 aa).

30–37 (GENAQGKT) contacts ATP.

It belongs to the RecF family.

It localises to the cytoplasm. Functionally, the RecF protein is involved in DNA metabolism; it is required for DNA replication and normal SOS inducibility. RecF binds preferentially to single-stranded, linear DNA. It also seems to bind ATP. This Enterococcus faecalis (strain ATCC 700802 / V583) protein is DNA replication and repair protein RecF.